The chain runs to 1059 residues: DNA-directed RNA polymerase subunit beta (1059 aa).

This sequence belongs to the RNA polymerase beta chain family. In terms of assembly, in plastids the minimal PEP RNA polymerase catalytic core is composed of four subunits: alpha, beta, beta', and beta''. When a (nuclear-encoded) sigma factor is associated with the core the holoenzyme is formed, which can initiate transcription (Potential).

The protein localises to the plastid. The protein resides in the apicoplast. It carries out the reaction RNA(n) + a ribonucleoside 5'-triphosphate = RNA(n+1) + diphosphate. Functionally, DNA-dependent RNA polymerase catalyzes the transcription of DNA into RNA using the four ribonucleoside triphosphates as substrates. This chain is DNA-directed RNA polymerase subunit beta (rpoB), found in Eimeria tenella (Coccidian parasite).